A 545-amino-acid chain; its full sequence is CWF19-like protein 1 homolog (545 aa).

The tract at residues 306–329 (YFYDMDGGRRKRQGGDNNKRDKRP) is disordered.

It belongs to the CWF19 family.

The sequence is that of CWF19-like protein 1 homolog from Drosophila melanogaster (Fruit fly).